A 1059-amino-acid polypeptide reads, in one-letter code: Disks large-associated protein 2 (1059 aa).

Disordered stretches follow at residues 31–56 (GEPE…EEDI) and 244–311 (TKSH…SDST). Residues 244 to 261 (TKSHSLEGSSKSNINGTK) are compositionally biased toward polar residues. Over residues 262-271 (SEGRMDDHHQ) the composition is skewed to basic and acidic residues. The segment covering 272 to 285 (SHLSKHSKRSKSKE) has biased composition (basic residues). Residues S302, S308, S390, and S456 each carry the phosphoserine modification. Disordered stretches follow at residues 446–466 (GDEE…VALR) and 632–669 (VTAQ…NSMD). The span at 632–645 (VTAQSSTESTQDAY) shows a compositional bias: polar residues. Residues S667, S670, S673, and S720 each carry the phosphoserine modification. The segment at 723–756 (VQDSEFPDHQPYPRSDVETATDSDTESRGLREYH) is disordered. At T743 the chain carries Phosphothreonine. S745 carries the post-translational modification Phosphoserine. Basic and acidic residues predominate over residues 747–756 (TESRGLREYH). 4 positions are modified to phosphoserine: S776, S811, S983, and S1012. A disordered region spans residues 985 to 1024 (ERKEERKIPPPIPKKPPKGKFPITREKSLDLPDRQRQEAR). Residues 1007–1024 (ITREKSLDLPDRQRQEAR) show a composition bias toward basic and acidic residues.

Belongs to the SAPAP family. In terms of assembly, interacts with DLG4/PSD-95. As to expression, expressed in various brain areas.

Its subcellular location is the cell membrane. It localises to the postsynaptic density. It is found in the synapse. Its function is as follows. May play a role in the molecular organization of synapses and neuronal cell signaling. Could be an adapter protein linking ion channel to the subsynaptic cytoskeleton. May induce enrichment of PSD-95/SAP90 at the plasma membrane. The protein is Disks large-associated protein 2 of Rattus norvegicus (Rat).